We begin with the raw amino-acid sequence, 295 residues long: Acetylglutamate kinase (295 aa).

Substrate-binding positions include 66–67 (GG), Arg-88, and Asn-193.

This sequence belongs to the acetylglutamate kinase family. ArgB subfamily.

It localises to the cytoplasm. It catalyses the reaction N-acetyl-L-glutamate + ATP = N-acetyl-L-glutamyl 5-phosphate + ADP. It functions in the pathway amino-acid biosynthesis; L-arginine biosynthesis; N(2)-acetyl-L-ornithine from L-glutamate: step 2/4. Its function is as follows. Catalyzes the ATP-dependent phosphorylation of N-acetyl-L-glutamate. This is Acetylglutamate kinase from Rhizobium rhizogenes (strain K84 / ATCC BAA-868) (Agrobacterium radiobacter).